Consider the following 254-residue polypeptide: Alcohol dehydrogenase (254 aa).

10-33 (FVAGLGGIGLDTSREIVKSGPKNL) is a binding site for NAD(+). Substrate is bound at residue S138. Residue Y151 is the Proton acceptor of the active site.

It belongs to the short-chain dehydrogenases/reductases (SDR) family. In terms of assembly, homodimer.

The catalysed reaction is a primary alcohol + NAD(+) = an aldehyde + NADH + H(+). It catalyses the reaction a secondary alcohol + NAD(+) = a ketone + NADH + H(+). The protein is Alcohol dehydrogenase (Adh) of Drosophila picticornis (Fruit fly).